The chain runs to 475 residues: Ribulose bisphosphate carboxylase large chain (475 aa).

A propeptide spanning residues 1–2 (MS) is cleaved from the precursor. Pro-3 carries the N-acetylproline modification. Lys-14 bears the N6,N6,N6-trimethyllysine mark. Residues Asn-123 and Thr-173 each contribute to the substrate site. Catalysis depends on Lys-175, which acts as the Proton acceptor. Residue Lys-177 participates in substrate binding. Residues Lys-201, Asp-203, and Glu-204 each coordinate Mg(2+). The residue at position 201 (Lys-201) is an N6-carboxylysine. His-294 serves as the catalytic Proton acceptor. Residues Arg-295, His-327, and Ser-379 each coordinate substrate.

It belongs to the RuBisCO large chain family. Type I subfamily. As to quaternary structure, heterohexadecamer of 8 large chains and 8 small chains; disulfide-linked. The disulfide link is formed within the large subunit homodimers. The cofactor is Mg(2+). The disulfide bond which can form in the large chain dimeric partners within the hexadecamer appears to be associated with oxidative stress and protein turnover.

It localises to the plastid. It is found in the chloroplast. The enzyme catalyses 2 (2R)-3-phosphoglycerate + 2 H(+) = D-ribulose 1,5-bisphosphate + CO2 + H2O. It catalyses the reaction D-ribulose 1,5-bisphosphate + O2 = 2-phosphoglycolate + (2R)-3-phosphoglycerate + 2 H(+). Functionally, ruBisCO catalyzes two reactions: the carboxylation of D-ribulose 1,5-bisphosphate, the primary event in carbon dioxide fixation, as well as the oxidative fragmentation of the pentose substrate in the photorespiration process. Both reactions occur simultaneously and in competition at the same active site. This Quercus rubra (Northern red oak) protein is Ribulose bisphosphate carboxylase large chain.